We begin with the raw amino-acid sequence, 256 residues long: Gluconate 5-dehydrogenase (256 aa).

An NADP(+)-binding site is contributed by 15–39; that stretch reads LVTGASRGIGLTLAKGLARYGAEVV. Serine 147 contacts substrate. Residue tyrosine 160 is the Proton acceptor of the active site.

Belongs to the short-chain dehydrogenases/reductases (SDR) family. As to quaternary structure, homodimer.

It localises to the cytoplasm. The enzyme catalyses D-gluconate + NADP(+) = 5-dehydro-D-gluconate + NADPH + H(+). In terms of biological role, catalyzes the reversible NADP-dependent oxidation of gluconate to 5-ketogluconate. Is involved in the non-phosphorylative, ketogenic oxidation of glucose. Is almost inactive with NAD as cosubstrate. Displays high substrate specificity since D-Glucose, D-sorbitol, and D-mannitol are not oxidized by the enzyme, and 2-ketogluconate and L-sorbose are not reduced. Can accept D-fructose as a substrate, with a rate that is only 10% of the rate of 5-ketogluconate reduction. The chain is Gluconate 5-dehydrogenase from Gluconobacter oxydans (strain 621H) (Gluconobacter suboxydans).